Reading from the N-terminus, the 729-residue chain is Transketolase (729 aa).

His-97 provides a ligand contact to substrate. Residues His-138 and 186 to 188 (GPL) each bind thiamine diphosphate. Asp-227 is a Mg(2+) binding site. Residues Gly-228 and Asn-257 each coordinate thiamine diphosphate. 2 residues coordinate Mg(2+): Asn-257 and Ile-259. Substrate is bound by residues His-332, Arg-423, and Ser-450. His-332 provides a ligand contact to thiamine diphosphate. The Proton donor role is filled by Glu-477. Residue Phe-503 coordinates thiamine diphosphate. The substrate site is built by His-527, Asp-535, and Arg-586.

Belongs to the transketolase family. As to quaternary structure, homodimer. Mg(2+) serves as cofactor. The cofactor is Ca(2+). Mn(2+) is required as a cofactor. It depends on Co(2+) as a cofactor. Requires thiamine diphosphate as cofactor.

The enzyme catalyses D-sedoheptulose 7-phosphate + D-glyceraldehyde 3-phosphate = aldehydo-D-ribose 5-phosphate + D-xylulose 5-phosphate. In terms of biological role, catalyzes the transfer of a two-carbon ketol group from a ketose donor to an aldose acceptor, via a covalent intermediate with the cofactor thiamine pyrophosphate. The protein is Transketolase (tkt) of Streptococcus pyogenes serotype M18 (strain MGAS8232).